We begin with the raw amino-acid sequence, 233 residues long: Orotidine 5'-phosphate decarboxylase (233 aa).

Residues Asp-10, Lys-32, Asp-59–Thr-68, Thr-119, Arg-180, Gln-189, Gly-209, and Arg-210 each bind substrate. The active-site Proton donor is the Lys-61.

The protein belongs to the OMP decarboxylase family. Type 1 subfamily. As to quaternary structure, homodimer.

It catalyses the reaction orotidine 5'-phosphate + H(+) = UMP + CO2. It participates in pyrimidine metabolism; UMP biosynthesis via de novo pathway; UMP from orotate: step 2/2. Functionally, catalyzes the decarboxylation of orotidine 5'-monophosphate (OMP) to uridine 5'-monophosphate (UMP). In Pasteurella multocida (strain Pm70), this protein is Orotidine 5'-phosphate decarboxylase.